The sequence spans 127 residues: MASTLTVRKSLSDRAKARARRQARGRKKIFGTVERPRMVVTRSSKHVFVQVIDDVAGNTLVSASTMEAELREMSGDKTAKAARVGTIIGERAKAAGITKVVFDKAGNQYHGRIAALADAAREAGLDF.

Residues 1 to 26 form a disordered region; the sequence is MASTLTVRKSLSDRAKARARRQARGR. The span at 17–26 shows a compositional bias: basic residues; the sequence is ARARRQARGR.

The protein belongs to the universal ribosomal protein uL18 family. In terms of assembly, part of the 50S ribosomal subunit; part of the 5S rRNA/L5/L18/L25 subcomplex. Contacts the 5S and 23S rRNAs.

This is one of the proteins that bind and probably mediate the attachment of the 5S RNA into the large ribosomal subunit, where it forms part of the central protuberance. The sequence is that of Large ribosomal subunit protein uL18 from Cutibacterium acnes (strain DSM 16379 / KPA171202) (Propionibacterium acnes).